A 133-amino-acid chain; its full sequence is Large-conductance mechanosensitive channel (133 aa).

The next 2 helical transmembrane spans lie at 10–30 (FAVK…GAFG) and 76–96 (GAFI…FSMV).

The protein belongs to the MscL family. In terms of assembly, homopentamer.

It is found in the cell inner membrane. Channel that opens in response to stretch forces in the membrane lipid bilayer. May participate in the regulation of osmotic pressure changes within the cell. The chain is Large-conductance mechanosensitive channel from Haemophilus ducreyi (strain 35000HP / ATCC 700724).